A 162-amino-acid chain; its full sequence is Caveolin-2 (162 aa).

At 1–86 the chain is on the cytoplasmic side; that stretch reads MGLETEKADV…FEISKYVMYK (86 aa). Tyr19 bears the Phosphotyrosine; by SRC mark. Phosphoserine occurs at positions 20 and 23. At Tyr27 the chain carries Phosphotyrosine; by SRC. Ser36 carries the phosphoserine modification. Residues 87-107 constitute an intramembrane region (helical); that stretch reads FLTVFLAIPLAFLAGILFATL. Over 108–162 the chain is Cytoplasmic; that stretch reads SCLHIWIIMPFVKTCLMVLPSVQTIWKSVTDAIIAPLCTSIGRSFSSVSLQLSQD.

This sequence belongs to the caveolin family. In terms of assembly, monomer or homodimer. Interacts with CAV1; the interaction forms a stable heterooligomeric complex that is required for targeting to lipid rafts and for caveolae formation. Tyrosine phosphorylated forms do not form heterooligomers with the Tyr-19-phosphorylated form existing as a monomer or dimer, and the Tyr-27-form as a monomer only. Interacts (tyrosine phosphorylated form) with the SH2 domain-containing proteins, RASA1, NCK1 and SRC. Interacts (tyrosine phosphorylated form) with INSR, the interaction (Tyr-27-phosphorylated form) is increased on insulin stimulation. Interacts (Tyr-19 phosphorylated form) with MAPK1 (phosphorylated form); the interaction, promoted by insulin, leads to nuclear location and MAPK1 activation. Interacts with STAT3; the interaction is increased on insulin-induced tyrosine phosphorylation leading to STAT activation. In terms of processing, phosphorylated on serine and tyrosine residues. CAV1 promotes phosphorylation on Ser-23 which then targets the complex to the plasma membrane, lipid rafts and caveolae. Phosphorylation on Ser-36 appears to modulate mitosis in endothelial cells. Phosphorylation on both Tyr-19 and Tyr-27 is required for insulin-induced 'Ser-727' phosphorylation of STAT3 and its activation. Phosphorylation on Tyr-19 is required for insulin-induced phosphorylation of MAPK1 and DNA binding of STAT3. Tyrosine phosphorylation is induced by both EGF and insulin (By. similarity).

It is found in the nucleus. Its subcellular location is the cytoplasm. The protein resides in the golgi apparatus membrane. The protein localises to the cell membrane. It localises to the membrane. It is found in the caveola. May act as a scaffolding protein within caveolar membranes. Interacts directly with G-protein alpha subunits and can functionally regulate their activity. Acts as an accessory protein in conjunction with CAV1 in targeting to lipid rafts and driving caveolae formation. The Ser-36 phosphorylated form has a role in modulating mitosis in endothelial cells. Positive regulator of cellular mitogenesis of the MAPK signaling pathway. Required for the insulin-stimulated nuclear translocation and activation of MAPK1 and STAT3, and the subsequent regulation of cell cycle progression. This chain is Caveolin-2 (CAV2), found in Callithrix jacchus (White-tufted-ear marmoset).